The sequence spans 327 residues: Chain length determinant protein (327 aa).

The Cytoplasmic segment spans residues Met1–Lys31. The helical transmembrane segment at Met32–Ala52 threads the bilayer. At Lys53–Thr294 the chain is on the periplasmic side. A helical membrane pass occupies residues Ala295–Gly315. Residues Arg316–Leu327 are Cytoplasmic-facing.

It belongs to the WzzB/Cld/Rol family.

The protein localises to the cell inner membrane. Its pathway is bacterial outer membrane biogenesis; lipopolysaccharide biosynthesis. Functionally, confers a modal distribution of chain length on the O-antigen component of lipopolysaccharide (LPS). Gives rise to a reduced number of short chain molecules and increases in numbers of longer molecules, with a modal value of 20. This chain is Chain length determinant protein (wzzB), found in Salmonella typhimurium (strain LT2 / SGSC1412 / ATCC 700720).